A 193-amino-acid polypeptide reads, in one-letter code: 3-isopropylmalate dehydratase small subunit (193 aa).

It belongs to the LeuD family. LeuD type 1 subfamily. In terms of assembly, heterodimer of LeuC and LeuD.

It catalyses the reaction (2R,3S)-3-isopropylmalate = (2S)-2-isopropylmalate. It participates in amino-acid biosynthesis; L-leucine biosynthesis; L-leucine from 3-methyl-2-oxobutanoate: step 2/4. Functionally, catalyzes the isomerization between 2-isopropylmalate and 3-isopropylmalate, via the formation of 2-isopropylmaleate. In Bacillus cereus (strain ZK / E33L), this protein is 3-isopropylmalate dehydratase small subunit.